The sequence spans 251 residues: Imidazole glycerol phosphate synthase subunit HisF (251 aa).

Catalysis depends on residues aspartate 10 and aspartate 129.

Belongs to the HisA/HisF family. In terms of assembly, heterodimer of HisH and HisF.

The protein localises to the cytoplasm. It carries out the reaction 5-[(5-phospho-1-deoxy-D-ribulos-1-ylimino)methylamino]-1-(5-phospho-beta-D-ribosyl)imidazole-4-carboxamide + L-glutamine = D-erythro-1-(imidazol-4-yl)glycerol 3-phosphate + 5-amino-1-(5-phospho-beta-D-ribosyl)imidazole-4-carboxamide + L-glutamate + H(+). The protein operates within amino-acid biosynthesis; L-histidine biosynthesis; L-histidine from 5-phospho-alpha-D-ribose 1-diphosphate: step 5/9. In terms of biological role, IGPS catalyzes the conversion of PRFAR and glutamine to IGP, AICAR and glutamate. The HisF subunit catalyzes the cyclization activity that produces IGP and AICAR from PRFAR using the ammonia provided by the HisH subunit. The sequence is that of Imidazole glycerol phosphate synthase subunit HisF from Cutibacterium acnes (strain DSM 16379 / KPA171202) (Propionibacterium acnes).